The chain runs to 426 residues: Serine hydroxymethyltransferase (426 aa).

(6S)-5,6,7,8-tetrahydrofolate is bound by residues L118 and 122-124 (GHL). At K227 the chain carries N6-(pyridoxal phosphate)lysine.

Belongs to the SHMT family. In terms of assembly, homodimer. Pyridoxal 5'-phosphate serves as cofactor.

It is found in the cytoplasm. The catalysed reaction is (6R)-5,10-methylene-5,6,7,8-tetrahydrofolate + glycine + H2O = (6S)-5,6,7,8-tetrahydrofolate + L-serine. Its pathway is one-carbon metabolism; tetrahydrofolate interconversion. The protein operates within amino-acid biosynthesis; glycine biosynthesis; glycine from L-serine: step 1/1. Catalyzes the reversible interconversion of serine and glycine with tetrahydrofolate (THF) serving as the one-carbon carrier. This reaction serves as the major source of one-carbon groups required for the biosynthesis of purines, thymidylate, methionine, and other important biomolecules. Also exhibits THF-independent aldolase activity toward beta-hydroxyamino acids, producing glycine and aldehydes, via a retro-aldol mechanism. The polypeptide is Serine hydroxymethyltransferase (Mycolicibacterium paratuberculosis (strain ATCC BAA-968 / K-10) (Mycobacterium paratuberculosis)).